The primary structure comprises 200 residues: Recombination protein RecR (200 aa).

The C4-type zinc-finger motif lies at 57–72 (CRQCRTLTEQELCPQC). Positions 80 to 175 (TQLCVVEGPT…VASRIAHGVP (96 aa)) constitute a Toprim domain.

Belongs to the RecR family.

May play a role in DNA repair. It seems to be involved in an RecBC-independent recombinational process of DNA repair. It may act with RecF and RecO. This Pseudomonas putida (strain ATCC 700007 / DSM 6899 / JCM 31910 / BCRC 17059 / LMG 24140 / F1) protein is Recombination protein RecR.